We begin with the raw amino-acid sequence, 503 residues long: Aspartyl/glutamyl-tRNA(Asn/Gln) amidotransferase subunit B (503 aa).

Belongs to the GatB/GatE family. GatB subfamily. As to quaternary structure, heterotrimer of A, B and C subunits.

The enzyme catalyses L-glutamyl-tRNA(Gln) + L-glutamine + ATP + H2O = L-glutaminyl-tRNA(Gln) + L-glutamate + ADP + phosphate + H(+). The catalysed reaction is L-aspartyl-tRNA(Asn) + L-glutamine + ATP + H2O = L-asparaginyl-tRNA(Asn) + L-glutamate + ADP + phosphate + 2 H(+). Allows the formation of correctly charged Asn-tRNA(Asn) or Gln-tRNA(Gln) through the transamidation of misacylated Asp-tRNA(Asn) or Glu-tRNA(Gln) in organisms which lack either or both of asparaginyl-tRNA or glutaminyl-tRNA synthetases. The reaction takes place in the presence of glutamine and ATP through an activated phospho-Asp-tRNA(Asn) or phospho-Glu-tRNA(Gln). This is Aspartyl/glutamyl-tRNA(Asn/Gln) amidotransferase subunit B from Mycolicibacterium smegmatis (strain ATCC 700084 / mc(2)155) (Mycobacterium smegmatis).